Reading from the N-terminus, the 156-residue chain is Oxidized purine nucleoside triphosphate hydrolase (156 aa).

Positions 3–132 (ASRLYTLVLV…WFPLLLQKKK (130 aa)) constitute a Nudix hydrolase domain. Residue Thr8 participates in 2-oxo-dATP binding. 8-oxo-dGMP-binding residues include Thr8 and Lys23. 2 residues coordinate 8-oxo-dGTP: Thr8 and Lys23. N(6)-methyl-AMP contacts are provided by Thr8 and Lys23. Positions 8 and 23 each coordinate O(6)-methyl-dGMP. 8-oxo-ATP is bound at residue Phe27. Residues Asn33 and 35-38 (FGGK) each bind 2-oxo-dATP. Asn33 is a binding site for 8-oxo-dGMP. 8-oxo-dGTP is bound by residues Asn33 and 35–38 (FGGK). Asn33 contacts O(6)-methyl-dGMP. 8-oxo-ATP is bound by residues 35–38 (FGGK) and Glu52. Residues Gly36, Glu52, Glu55, Glu56, and Glu100 each contribute to the Mg(2+) site. Residues 37–58 (GKVQEGETIEDGARRELQEESG) carry the Nudix box motif. Glu56 serves as a coordination point for 8-oxo-ATP. 117-120 (WPDD) serves as a coordination point for 2-oxo-dATP. 8-oxo-dGMP is bound at residue 117-120 (WPDD). 117–120 (WPDD) lines the 8-oxo-dGTP pocket. 117 to 120 (WPDD) provides a ligand contact to N(6)-methyl-AMP. An O(6)-methyl-dGMP-binding site is contributed by 117 to 120 (WPDD). Residue 117–120 (WPDD) coordinates 8-oxo-ATP.

It belongs to the Nudix hydrolase family. In terms of assembly, monomer. Requires Mg(2+) as cofactor. In terms of processing, the N-terminus is blocked. Widely expressed with highest expression in thymus, testis, embryo and proliferating blood lymphocytes.

It localises to the cytoplasm. The protein localises to the cytosol. It is found in the mitochondrion matrix. The protein resides in the nucleus. It catalyses the reaction 2-oxo-dATP + H2O = 2-oxo-dAMP + diphosphate + H(+). The enzyme catalyses 2-oxo-ATP + H2O = 2-oxo-AMP + diphosphate + H(+). The catalysed reaction is 8-oxo-dGTP + H2O = 8-oxo-dGMP + diphosphate + H(+). It carries out the reaction 8-oxo-dATP + H2O = 8-oxo-dAMP + diphosphate + H(+). It catalyses the reaction O(6)-methyl-dGTP + H2O = O(6)-methyl-dGMP + diphosphate + H(+). The enzyme catalyses N(6)-methyl-dATP + H2O = N(6)-methyl-dAMP + diphosphate + H(+). The catalysed reaction is N(6)-methyl-ATP + H2O = N(6)-methyl-AMP + diphosphate + H(+). With respect to regulation, inhibited by 2-oxo-dADP and 8-oxo-dGDP. In terms of biological role, oxidized purine nucleoside triphosphate hydrolase which is a prominent sanitizer of the oxidized nucleotide pool. Catalyzes the hydrolysis of 2-oxo-dATP (2-hydroxy-dATP) into 2-oxo-dAMP. Also has a significant hydrolase activity toward 2-oxo-ATP, 8-oxo-dGTP and 8-oxo-dATP. Through the hydrolysis of oxidized purine nucleoside triphosphates, prevents their incorporation into DNA and the subsequent transversions A:T to C:G and G:C to T:A. Also catalyzes the hydrolysis of methylated purine nucleoside triphosphate preventing their integration into DNA. Through this antimutagenic activity protects cells from oxidative stress. The sequence is that of Oxidized purine nucleoside triphosphate hydrolase (NUDT1) from Homo sapiens (Human).